Here is a 643-residue protein sequence, read N- to C-terminus: Chromosomal replication initiator protein DnaA (643 aa).

A domain I, interacts with DnaA modulators region spans residues 1–97; the sequence is MADVPADLAA…VDDSAGEPPP (97 aa). Residues 87-303 form a disordered region; the sequence is TVDDSAGEPP…ASGPGEPTAR (217 aa). A domain II region spans residues 97–302; the sequence is PAAPPAQQTP…PASGPGEPTA (206 aa). Positions 195 to 209 are enriched in polar residues; it reads SPSSQDAYGSPSQDY. Positions 222–269 are enriched in basic and acidic residues; that stretch reads QRGDYDTPRAEYEPARPDYDSARPDYESARPEYDQRDPVRRELPEPPA. A compositionally biased stretch (low complexity) spans 291–300; that stretch reads PAPASGPGEP. Positions 303 to 519 are domain III, AAA+ region; sequence RLNPKYLFDT…GALIRVTAFA (217 aa). Positions 347, 349, 350, and 351 each coordinate ATP. The tract at residues 520–643 is domain IV, binds dsDNA; it reads SLNRQPVDLG…TELTNRIKNG (124 aa).

The protein belongs to the DnaA family. Oligomerizes as a right-handed, spiral filament on DNA at oriC.

It is found in the cytoplasm. Functionally, plays an essential role in the initiation and regulation of chromosomal replication. ATP-DnaA binds to the origin of replication (oriC) to initiate formation of the DNA replication initiation complex once per cell cycle. Binds the DnaA box (a 9 base pair repeat at the origin) and separates the double-stranded (ds)DNA. Forms a right-handed helical filament on oriC DNA; dsDNA binds to the exterior of the filament while single-stranded (ss)DNA is stabiized in the filament's interior. The ATP-DnaA-oriC complex binds and stabilizes one strand of the AT-rich DNA unwinding element (DUE), permitting loading of DNA polymerase. After initiation quickly degrades to an ADP-DnaA complex that is not apt for DNA replication. Binds acidic phospholipids. The sequence is that of Chromosomal replication initiator protein DnaA from Streptomyces reticuli.